Consider the following 123-residue polypeptide: Small ribosomal subunit protein uS12 (123 aa).

A disordered region spans residues 1–31; that stretch reads MPTIQQLVRKGRHSKKAKVATAGLKGSPQRR. The segment covering 9–18 has biased composition (basic residues); that stretch reads RKGRHSKKAK. Asp89 carries the post-translational modification 3-methylthioaspartic acid.

It belongs to the universal ribosomal protein uS12 family. As to quaternary structure, part of the 30S ribosomal subunit. Contacts proteins S8 and S17. May interact with IF1 in the 30S initiation complex.

With S4 and S5 plays an important role in translational accuracy. Functionally, interacts with and stabilizes bases of the 16S rRNA that are involved in tRNA selection in the A site and with the mRNA backbone. Located at the interface of the 30S and 50S subunits, it traverses the body of the 30S subunit contacting proteins on the other side and probably holding the rRNA structure together. The combined cluster of proteins S8, S12 and S17 appears to hold together the shoulder and platform of the 30S subunit. The chain is Small ribosomal subunit protein uS12 from Corynebacterium aurimucosum (strain ATCC 700975 / DSM 44827 / CIP 107346 / CN-1) (Corynebacterium nigricans).